The primary structure comprises 121 residues: Protein p14.5 (121 aa).

Residue A2 is modified to N-acetylalanine; by host. Residues 84 to 121 (SLVPDEADNKPEDDEESGGAKPKKKKHLFPKLSSHKSK) form a disordered region. Residues 104–121 (KPKKKKHLFPKLSSHKSK) show a composition bias toward basic residues.

It belongs to the asfivirus structural protein p14.5 family. As to quaternary structure, interacts with the major capsid protein. Interacts with host IRF3; this interaction interferes with the recruitment of IRF3 to TBK1. Acetylated.

It is found in the virion. Structural protein required for transport of intracellular particles from the assembly sites to the plasma membrane. Binds to both ssDNA and dsDNA. Suppressed the activation of the cGAS/STING pathway by interfering with the recruitment of IRF3 to TBK1, which in turn suppresses IRF3 phosphorylation, decreasing interferon production. This chain is Protein p14.5, found in African swine fever virus (isolate Pig/Kenya/KEN-50/1950) (ASFV).